Here is a 119-residue protein sequence, read N- to C-terminus: Holo-[acyl-carrier-protein] synthase (119 aa).

D5 and E51 together coordinate Mg(2+).

It belongs to the P-Pant transferase superfamily. AcpS family. The cofactor is Mg(2+).

Its subcellular location is the cytoplasm. The enzyme catalyses apo-[ACP] + CoA = holo-[ACP] + adenosine 3',5'-bisphosphate + H(+). Transfers the 4'-phosphopantetheine moiety from coenzyme A to a Ser of acyl-carrier-protein. This chain is Holo-[acyl-carrier-protein] synthase, found in Helicobacter pylori (strain J99 / ATCC 700824) (Campylobacter pylori J99).